A 90-amino-acid chain; its full sequence is Genome polyprotein (90 aa).

It belongs to the potyviridae genome polyprotein family. Post-translationally, genome polyprotein of potyviruses undergoes post-translational proteolytic processing by the main proteinase NIa-pro resulting in the production of at least ten individual proteins. The P1 proteinase and the HC-pro cleave only their respective C-termini autocatalytically. 6K1 is essential for proper proteolytic separation of P3 from CI.

The protein resides in the virion. Its function is as follows. Involved in aphid transmission, cell-to-cell and systemis movement, encapsidation of the viral RNA and in the regulation of viral RNA amplification. The protein is Genome polyprotein of Gloriosa stripe mosaic virus (GSMV).